The primary structure comprises 379 residues: Trans-prenyltransferase abpB (379 aa).

Substrate is bound by residues 90–91, R112, K197, R264, K266, Y268, and Y338; that span reads RL.

The protein belongs to the tryptophan dimethylallyltransferase family.

The enzyme catalyses aspulvinone E + 2 dimethylallyl diphosphate = aspulvinone H + 2 diphosphate. The catalysed reaction is butyrolactone II + dimethylallyl diphosphate = butyrolactone I + diphosphate. The protein operates within secondary metabolite biosynthesis. Functionally, trans-prenyltransferase that acts in both the aspulvinones and butyrolactones pathways. Prenylates aspulvinone E and butyrolactone II to yield repectively aspulvinone H and butyrolactone I. The protein is Trans-prenyltransferase abpB of Aspergillus terreus (strain NIH 2624 / FGSC A1156).